A 264-amino-acid polypeptide reads, in one-letter code: DNA repair protein RecO (264 aa).

Belongs to the RecO family.

In terms of biological role, involved in DNA repair and RecF pathway recombination. The chain is DNA repair protein RecO from Leuconostoc citreum (strain KM20).